A 275-amino-acid polypeptide reads, in one-letter code: MRRIVVKDFAIGPKEPLVIMSGPCVIESETHCLKAAETLKNMFEKYNVSLIFKSSYDKANRSAYDSFRGPGLEEGLRILERIQKEFGLAVVTDVHSPQEATTAGSVCEIIQIPAFLCRQTDLILAAAQTGAIVSIKKGQFLAPWDMENVIRKMESGGNSNIILVDRGTTFGYNNLISDMRGIPIMQELGYPVCFDATHSVQKPGGLGSKSGGDREFIPILAKAALAAGANCLFIESHPNPSEAKSDAASVMDFKDLDQLLPQFKELYELIQKQGK.

Belongs to the KdsA family.

The protein resides in the cytoplasm. The catalysed reaction is D-arabinose 5-phosphate + phosphoenolpyruvate + H2O = 3-deoxy-alpha-D-manno-2-octulosonate-8-phosphate + phosphate. It functions in the pathway carbohydrate biosynthesis; 3-deoxy-D-manno-octulosonate biosynthesis; 3-deoxy-D-manno-octulosonate from D-ribulose 5-phosphate: step 2/3. Its pathway is bacterial outer membrane biogenesis; lipopolysaccharide biosynthesis. In Protochlamydia amoebophila (strain UWE25), this protein is 2-dehydro-3-deoxyphosphooctonate aldolase.